Consider the following 49-residue polypeptide: Large ribosomal subunit protein bL33 (49 aa).

This sequence belongs to the bacterial ribosomal protein bL33 family.

In Clostridium botulinum (strain Alaska E43 / Type E3), this protein is Large ribosomal subunit protein bL33.